Reading from the N-terminus, the 158-residue chain is Large ribosomal subunit protein uL11 (158 aa).

The segment at 1–21 is disordered; it reads MAQSVKTMVEGGKATTGPPIG.

The protein belongs to the universal ribosomal protein uL11 family. Part of the ribosomal stalk of the 50S ribosomal subunit. Interacts with L10 and the large rRNA to form the base of the stalk. L10 forms an elongated spine to which L12 dimers bind in a sequential fashion forming a multimeric L10(L12)X complex.

In terms of biological role, forms part of the ribosomal stalk which helps the ribosome interact with GTP-bound translation factors. This is Large ribosomal subunit protein uL11 from Thermoplasma volcanium (strain ATCC 51530 / DSM 4299 / JCM 9571 / NBRC 15438 / GSS1).